The primary structure comprises 95 residues: Citrate lyase acyl carrier protein (95 aa).

An O-(phosphoribosyl dephospho-coenzyme A)serine modification is found at Ser14.

The protein belongs to the CitD family. Oligomer with a subunit composition of (alpha,beta,gamma)6.

Its subcellular location is the cytoplasm. In terms of biological role, covalent carrier of the coenzyme of citrate lyase. The sequence is that of Citrate lyase acyl carrier protein from Haemophilus influenzae (strain PittGG).